Here is a 276-residue protein sequence, read N- to C-terminus: Diaminopimelate epimerase (276 aa).

The substrate site is built by asparagine 13, glutamine 46, and asparagine 66. The Proton donor role is filled by cysteine 75. Substrate is bound by residues glycine 76 to asparagine 77, asparagine 159, asparagine 192, and glutamate 210 to arginine 211. The active-site Proton acceptor is cysteine 219. Residue glycine 220–serine 221 participates in substrate binding.

It belongs to the diaminopimelate epimerase family. Homodimer.

The protein localises to the cytoplasm. The enzyme catalyses (2S,6S)-2,6-diaminopimelate = meso-2,6-diaminopimelate. It functions in the pathway amino-acid biosynthesis; L-lysine biosynthesis via DAP pathway; DL-2,6-diaminopimelate from LL-2,6-diaminopimelate: step 1/1. Functionally, catalyzes the stereoinversion of LL-2,6-diaminopimelate (L,L-DAP) to meso-diaminopimelate (meso-DAP), a precursor of L-lysine and an essential component of the bacterial peptidoglycan. The polypeptide is Diaminopimelate epimerase (Pseudoalteromonas atlantica (strain T6c / ATCC BAA-1087)).